A 121-amino-acid polypeptide reads, in one-letter code: Basic phospholipase A2 homolog BnSP-7 (121 aa).

Cystine bridges form between C26–C115, C28–C44, C43–C95, C49–C121, C50–C88, C57–C81, and C75–C86. The important for membrane-damaging activities in eukaryotes and bacteria; heparin-binding stretch occupies residues 105–117 (KKYRYHLKPFCKK).

The protein belongs to the phospholipase A2 family. Group II subfamily. K49 sub-subfamily. Homodimer; non-covalently linked (probable alternative/compact dimer conformation in solution). Expressed by the venom gland.

Its subcellular location is the secreted. With respect to regulation, heparin inhibits the neuromuscular effect, myotoxin activity and edema-inducing effects. Bromophenacyl bromide (BPB) inhibits the neuromuscular effect, the myotoxin activity and edema-inducing effects. Snake venom phospholipase A2 (PLA2) that lacks enzymatic activity. Is myotoxic and displays edema-inducing activity. Displays bactericidal activity and promotes the blockage of the neuromuscular contraction of the chick biventer cervicis muscle. Also disrupts artificial membranes, and provokes tissue damages characterized by edema, necrosis and inflammation. May act as pro-inflammatory mediators, inducing metalloproteinase and cytokine production from the inflammatory and satellite cells. A model of myotoxic mechanism has been proposed: an apo Lys49-PLA2 is activated by the entrance of a hydrophobic molecule (e.g. fatty acid) at the hydrophobic channel of the protein leading to a reorientation of a monomer. This reorientation causes a transition between 'inactive' to 'active' states, causing alignment of C-terminal and membrane-docking sites (MDoS) side-by-side and putting the membrane-disruption sites (MDiS) in the same plane, exposed to solvent and in a symmetric position for both monomers. The MDoS region stabilizes the toxin on membrane by the interaction of charged residues with phospholipid head groups. Subsequently, the MDiS region destabilizes the membrane with penetration of hydrophobic residues. This insertion causes a disorganization of the membrane, allowing an uncontrolled influx of ions (i.e. calcium and sodium), and eventually triggering irreversible intracellular alterations and cell death. This Bothrops pauloensis (Neuwied's lancehead) protein is Basic phospholipase A2 homolog BnSP-7.